The sequence spans 29 residues: U20-ctenitoxin-Co1a (29 aa).

2 cysteine pairs are disulfide-bonded: Cys-3-Cys-16 and Cys-10-Cys-21.

In terms of tissue distribution, expressed by the venom gland.

Its subcellular location is the secreted. The polypeptide is U20-ctenitoxin-Co1a (Ctenus ornatus (Brazilian spider)).